Here is a 410-residue protein sequence, read N- to C-terminus: Chitin deacetylase 3 (410 aa).

An N-terminal signal peptide occupies residues 1 to 18 (MYGHLSLSTLSLLAVVAA). Residues 19–39 (APFPESWLQPRDSDVSQLFRR) constitute a propeptide that is removed on maturation. N-linked (GlcNAc...) asparagine glycans are attached at residues Asn61 and Asn80. The region spanning 124-314 (KVWALSFDDG…KAVANGWSVK (191 aa)) is the NodB homology domain. Asp131 (proton acceptor) is an active-site residue. Residue Asp131 coordinates acetate. Residue Asp132 participates in Co(2+) binding. Asn149 is a glycosylation site (N-linked (GlcNAc...) asparagine). Co(2+) contacts are provided by His183 and His187. Tyr225 contributes to the acetate binding site. Residue Asn279 is glycosylated (N-linked (GlcNAc...) asparagine). His289 (proton donor) is an active-site residue. Residue Asn293 is glycosylated (N-linked (GlcNAc...) asparagine). Ser385 carries GPI-anchor amidated serine lipidation. Positions 386 to 410 (SSWPIANRPSLFVIACGLALAAIMV) are cleaved as a propeptide — removed in mature form.

Belongs to the polysaccharide deacetylase family. The cofactor is Co(2+).

Its subcellular location is the cell membrane. It carries out the reaction [(1-&gt;4)-N-acetyl-beta-D-glucosaminyl](n) + n H2O = chitosan + n acetate. Functionally, hydrolyzes the N-acetamido groups of N-acetyl-D-glucosamine residues in chitin to form chitosan and acetate. Chitosan is required to anchor melanin to the cell wall, for maintenance of cell wall integrity, and for proper cytokinesis. Chitosan offers an advantage during infection as it is less readily detected than chitin by host immunosurveillance mechanisms. The polypeptide is Chitin deacetylase 3 (Cryptococcus neoformans var. neoformans serotype D (strain JEC21 / ATCC MYA-565) (Filobasidiella neoformans)).